Reading from the N-terminus, the 499-residue chain is MAKVDLMEYERALELFEPVLGFEVHVELNTKTKMFCGCANEFGSGANTNTCPTCLGLPGGLPHVNEKAIESSIRLGLALGCDIAESSRFARKNYFYPDLAKNFQTSQYDEPIAHDGRVSIELENGRELTIEIERAHMEEDAGKLTHIGGATGRIQGADHSLVDFNRGGVPLVEIVTKMIEGAETDAPEVGRTYVRAIRDIVKALGVSNARMEEGNVRCDANVSLRRRGSSELGTRTETKNVNSLRSIERAVRYEIQRQAAILEAGGAIVQETRHWHEDTGSTSAGRPKSDADDYRYFPEPDLVPVAPSREWIEELRGTLPEPPAARRKRLTAEWGFTALEFQDVANADLLDELEATIAAGAAPAAARKWWTGEIARVANAQGVAAGTLVAPEHVAELAGLVEAGTLTDRLARQVLEGVIAGEGRPQEVVDARGLAVVSDDGALVAAIDEALAAQPDVLAKIRDGKVQAAGAVIGAVMKAMKGQADAARVRELVLERASQ.

It belongs to the GatB/GatE family. GatB subfamily. In terms of assembly, heterotrimer of A, B and C subunits.

The catalysed reaction is L-glutamyl-tRNA(Gln) + L-glutamine + ATP + H2O = L-glutaminyl-tRNA(Gln) + L-glutamate + ADP + phosphate + H(+). It carries out the reaction L-aspartyl-tRNA(Asn) + L-glutamine + ATP + H2O = L-asparaginyl-tRNA(Asn) + L-glutamate + ADP + phosphate + 2 H(+). Functionally, allows the formation of correctly charged Asn-tRNA(Asn) or Gln-tRNA(Gln) through the transamidation of misacylated Asp-tRNA(Asn) or Glu-tRNA(Gln) in organisms which lack either or both of asparaginyl-tRNA or glutaminyl-tRNA synthetases. The reaction takes place in the presence of glutamine and ATP through an activated phospho-Asp-tRNA(Asn) or phospho-Glu-tRNA(Gln). This Leifsonia xyli subsp. xyli (strain CTCB07) protein is Aspartyl/glutamyl-tRNA(Asn/Gln) amidotransferase subunit B.